The chain runs to 320 residues: Aldose reductase (320 aa).

Residue Y60 is the Proton donor of the active site. A substrate-binding site is contributed by H121. 215–269 (SPLGSSEKNLAHDPVVEKVANKLNKTPGQVLIKWALQRGTSVIPKSSKDERIKEN) contacts NADP(+).

Belongs to the aldo/keto reductase family.

The enzyme catalyses an alditol + NAD(+) = an aldose + NADH + H(+). It carries out the reaction an alditol + NADP(+) = an aldose + NADPH + H(+). This Hordeum vulgare (Barley) protein is Aldose reductase.